The following is a 492-amino-acid chain: Pre-mRNA-processing factor 19 (492 aa).

Residues 1 to 72 enclose the U-box domain; that stretch reads MSFVCGISGE…APRNVSGTSI (72 aa). 6 WD repeats span residues 207–246, 249–288, 291–330, 336–375, 378–417, and 461–491; these read HSTG…VMQT, GHNK…SKAI, VHQA…SLCK, GSQI…VAAA, GHTA…NLKT, and DHSG…RVFS.

This sequence belongs to the WD repeat PRP19 family. Homotetramer. Component of the NTC complex (or PRP19-associated complex) which is associated with the spliceosome.

Its subcellular location is the nucleus. It is found in the nucleoplasm. It carries out the reaction S-ubiquitinyl-[E2 ubiquitin-conjugating enzyme]-L-cysteine + [acceptor protein]-L-lysine = [E2 ubiquitin-conjugating enzyme]-L-cysteine + N(6)-ubiquitinyl-[acceptor protein]-L-lysine.. It participates in protein modification; protein ubiquitination. Functionally, probable ubiquitin-protein ligase which is mainly involved pre-mRNA splicing and DNA repair. Core component of the NTC/Nineteen complex which is part of the spliceosome and participates in its assembly, its remodeling and is required for its activity. Together with emb-4, necessary for interaction of rnp-4, a probable exon junction complex component, with mRNAs and spliceosomal snRNAs. Plays a role in nuclear retention of unspliced mRNAs. This is Pre-mRNA-processing factor 19 (prp-19) from Caenorhabditis elegans.